The chain runs to 395 residues: Na(+)/H(+) antiporter NhaA (395 aa).

11 helical membrane passes run Phe-11–Ile-31, Leu-61–Val-81, Ile-96–Phe-116, Gly-127–Gly-147, Leu-156–Phe-176, Gly-179–Met-199, Leu-215–Phe-237, Val-262–Val-282, Ile-295–Val-315, Val-334–Val-354, and Met-366–Ala-386.

The protein belongs to the NhaA Na(+)/H(+) (TC 2.A.33) antiporter family.

The protein resides in the cell inner membrane. It catalyses the reaction Na(+)(in) + 2 H(+)(out) = Na(+)(out) + 2 H(+)(in). Functionally, na(+)/H(+) antiporter that extrudes sodium in exchange for external protons. This chain is Na(+)/H(+) antiporter NhaA, found in Pseudomonas fluorescens (strain Pf0-1).